Consider the following 280-residue polypeptide: NAD kinase (280 aa).

The Proton acceptor role is filled by Asp-60. Residues 60–61 (DG), 134–135 (ND), Arg-145, Asp-164, 175–180 (TAYSLS), and Gln-234 contribute to the NAD(+) site.

This sequence belongs to the NAD kinase family. A divalent metal cation is required as a cofactor.

Its subcellular location is the cytoplasm. It catalyses the reaction NAD(+) + ATP = ADP + NADP(+) + H(+). In terms of biological role, involved in the regulation of the intracellular balance of NAD and NADP, and is a key enzyme in the biosynthesis of NADP. Catalyzes specifically the phosphorylation on 2'-hydroxyl of the adenosine moiety of NAD to yield NADP. This chain is NAD kinase, found in Carboxydothermus hydrogenoformans (strain ATCC BAA-161 / DSM 6008 / Z-2901).